The primary structure comprises 301 residues: Sulfate adenylyltransferase subunit 2 (301 aa).

Positions R279–F301 are disordered.

The protein belongs to the PAPS reductase family. CysD subfamily. As to quaternary structure, heterodimer composed of CysD, the smaller subunit, and CysN.

It catalyses the reaction sulfate + ATP + H(+) = adenosine 5'-phosphosulfate + diphosphate. It participates in sulfur metabolism; hydrogen sulfide biosynthesis; sulfite from sulfate: step 1/3. Its function is as follows. With CysN forms the ATP sulfurylase (ATPS) that catalyzes the adenylation of sulfate producing adenosine 5'-phosphosulfate (APS) and diphosphate, the first enzymatic step in sulfur assimilation pathway. APS synthesis involves the formation of a high-energy phosphoric-sulfuric acid anhydride bond driven by GTP hydrolysis by CysN coupled to ATP hydrolysis by CysD. The polypeptide is Sulfate adenylyltransferase subunit 2 (Geotalea uraniireducens (strain Rf4) (Geobacter uraniireducens)).